The sequence spans 1429 residues: DNA-directed RNA polymerase subunit beta' (1429 aa).

Zn(2+) contacts are provided by Cys68, Cys70, Cys83, and Cys86. Residues Asp459, Asp461, and Asp463 each coordinate Mg(2+). Zn(2+)-binding residues include Cys805, Cys879, Cys886, and Cys889. The segment at 1407-1429 (ESFPLLGGDGEPASTTSSTTEGE) is disordered. Residues 1419–1429 (ASTTSSTTEGE) show a composition bias toward polar residues.

This sequence belongs to the RNA polymerase beta' chain family. As to quaternary structure, the RNAP catalytic core consists of 2 alpha, 1 beta, 1 beta' and 1 omega subunit. When a sigma factor is associated with the core the holoenzyme is formed, which can initiate transcription. Mg(2+) serves as cofactor. Zn(2+) is required as a cofactor.

It carries out the reaction RNA(n) + a ribonucleoside 5'-triphosphate = RNA(n+1) + diphosphate. Functionally, DNA-dependent RNA polymerase catalyzes the transcription of DNA into RNA using the four ribonucleoside triphosphates as substrates. This is DNA-directed RNA polymerase subunit beta' from Rhodopirellula baltica (strain DSM 10527 / NCIMB 13988 / SH1).